Reading from the N-terminus, the 391-residue chain is MTDQRGAICGAATLVVKVGSSSLTLPGGGIDVRRVDDLVDALSEVIAVGRRVVLVSSGAIATGFPAMGITHRPRTLAGKQAAASVGQGILLAHYASRFASHGLRVGQVLLTVNDLVRPTSYRNAWSTLDTLLGLGVVPIVNENDTVATGEIRFGDNDRLAALVAELVRAQALILLSDVDALYTAHPDSPDARRVEVVEDIDTLDVDTHKAGSGVGTGGMTTKLEAARMATCAGVPVVLAAAVDAPDVLAGVPVGTYFRPLATRRPRRLLWLADAATPQGQIVIDDGAVEALTQRHSSLLAVGVTRVHGDFQAGDPVTILASDGRVVGRGIAQFSHDEVRVMRGRSSAWLAAEMGPAASREIIHRDAMVLSRRRKAEPSSRNQKSSGSRVTS.

Lysine 17 serves as a coordination point for ATP. Residues serine 57, aspartate 144, and asparagine 156 each coordinate substrate. ATP-binding positions include 176–177 and 216–222; these read SD and TGGMTTK. Positions 278–356 constitute a PUA domain; the sequence is QGQIVIDDGA…AWLAAEMGPA (79 aa). Residues 370–391 form a disordered region; that stretch reads SRRRKAEPSSRNQKSSGSRVTS. Residues 378-391 are compositionally biased toward polar residues; that stretch reads SSRNQKSSGSRVTS.

It belongs to the glutamate 5-kinase family.

It localises to the cytoplasm. It catalyses the reaction L-glutamate + ATP = L-glutamyl 5-phosphate + ADP. The protein operates within amino-acid biosynthesis; L-proline biosynthesis; L-glutamate 5-semialdehyde from L-glutamate: step 1/2. In terms of biological role, catalyzes the transfer of a phosphate group to glutamate to form L-glutamate 5-phosphate. The protein is Glutamate 5-kinase of Cutibacterium acnes (strain DSM 16379 / KPA171202) (Propionibacterium acnes).